Here is a 369-residue protein sequence, read N- to C-terminus: Transcription factor GTE6 (369 aa).

The Bromo domain occupies Lys-89–Phe-198. A coiled-coil region spans residues Lys-201–Glu-263. In terms of domain architecture, NET spans Met-250 to Lys-331. The segment covering Lys-329–Glu-348 has biased composition (basic and acidic residues). A disordered region spans residues Lys-329–Ile-369. The Bipartite nuclear localization signal motif lies at Lys-351–Arg-368.

As to expression, abundantly expressed in flowers. Weakly expressed in roots, leaves and siliques; and undetectable in 5-day-old seedlings. In the basal rosette leaves of 21-day-old plants, it is more abundant in leaves 6 and 7, which possess narrow elliptical laminae, than in leaves 1-4, which have round laminae, suggesting a possible correlation between its expression and the formation of elliptical leaf laminae in mature leaves.

It is found in the nucleus. Its function is as follows. Regulates differences in leaf patterning between juvenile and mature leaves by controlling differences in the development of primordia produced during juvenile and mature phases. Acts by activating transcription of the myb-domain protein AS1, a gene involved in leaf-axis specification. Associates with the promoter and the start of the transcribed region of AS1 and up-regulates expression of AS1 through acetylation of histones H3 and H4. The protein is Transcription factor GTE6 (GTE6) of Arabidopsis thaliana (Mouse-ear cress).